Here is a 345-residue protein sequence, read N- to C-terminus: Phosphoribosylformylglycinamidine cyclo-ligase (345 aa).

The protein belongs to the AIR synthase family.

The protein resides in the cytoplasm. It catalyses the reaction 2-formamido-N(1)-(5-O-phospho-beta-D-ribosyl)acetamidine + ATP = 5-amino-1-(5-phospho-beta-D-ribosyl)imidazole + ADP + phosphate + H(+). Its pathway is purine metabolism; IMP biosynthesis via de novo pathway; 5-amino-1-(5-phospho-D-ribosyl)imidazole from N(2)-formyl-N(1)-(5-phospho-D-ribosyl)glycinamide: step 2/2. In Shewanella amazonensis (strain ATCC BAA-1098 / SB2B), this protein is Phosphoribosylformylglycinamidine cyclo-ligase.